The chain runs to 312 residues: Glyoxylate/hydroxypyruvate reductase A (312 aa).

Residue Arg227 is part of the active site. Catalysis depends on His275, which acts as the Proton donor.

Belongs to the D-isomer specific 2-hydroxyacid dehydrogenase family. GhrA subfamily.

It is found in the cytoplasm. It catalyses the reaction glycolate + NADP(+) = glyoxylate + NADPH + H(+). It carries out the reaction (R)-glycerate + NAD(+) = 3-hydroxypyruvate + NADH + H(+). The enzyme catalyses (R)-glycerate + NADP(+) = 3-hydroxypyruvate + NADPH + H(+). In terms of biological role, catalyzes the NADPH-dependent reduction of glyoxylate and hydroxypyruvate into glycolate and glycerate, respectively. This chain is Glyoxylate/hydroxypyruvate reductase A, found in Salmonella heidelberg (strain SL476).